A 352-amino-acid chain; its full sequence is UDP-N-acetylglucosamine--N-acetylmuramyl-(pentapeptide) pyrophosphoryl-undecaprenol N-acetylglucosamine transferase (352 aa).

UDP-N-acetyl-alpha-D-glucosamine contacts are provided by residues 12–14 (TGG), Asn124, Arg160, Ser188, and Gln287.

It belongs to the glycosyltransferase 28 family. MurG subfamily.

The protein resides in the cell inner membrane. It catalyses the reaction di-trans,octa-cis-undecaprenyl diphospho-N-acetyl-alpha-D-muramoyl-L-alanyl-D-glutamyl-meso-2,6-diaminopimeloyl-D-alanyl-D-alanine + UDP-N-acetyl-alpha-D-glucosamine = di-trans,octa-cis-undecaprenyl diphospho-[N-acetyl-alpha-D-glucosaminyl-(1-&gt;4)]-N-acetyl-alpha-D-muramoyl-L-alanyl-D-glutamyl-meso-2,6-diaminopimeloyl-D-alanyl-D-alanine + UDP + H(+). It participates in cell wall biogenesis; peptidoglycan biosynthesis. Functionally, cell wall formation. Catalyzes the transfer of a GlcNAc subunit on undecaprenyl-pyrophosphoryl-MurNAc-pentapeptide (lipid intermediate I) to form undecaprenyl-pyrophosphoryl-MurNAc-(pentapeptide)GlcNAc (lipid intermediate II). The polypeptide is UDP-N-acetylglucosamine--N-acetylmuramyl-(pentapeptide) pyrophosphoryl-undecaprenol N-acetylglucosamine transferase (Dechloromonas aromatica (strain RCB)).